The sequence spans 259 residues: Glandular kallikrein-10 (259 aa).

A signal peptide spans methionine 1 to alanine 18. Residues proline 19–arginine 24 constitute a propeptide, activation peptide. The Peptidase S1 domain maps to isoleucine 25–lysine 256. Cystine bridges form between cysteine 31–cysteine 171, cysteine 48–cysteine 64, cysteine 150–cysteine 217, cysteine 182–cysteine 196, and cysteine 207–cysteine 232. Histidine 63 serves as the catalytic Charge relay system. N-linked (GlcNAc...) asparagine glycans are attached at residues asparagine 91 and asparagine 106. Residue aspartate 118 is the Charge relay system of the active site. Serine 211 acts as the Charge relay system in catalysis.

Belongs to the peptidase S1 family. Kallikrein subfamily. Heterodimer of a light chain and heavy chain linked by a disulfide bond. In terms of processing, probably N- and O-glycosylated. Kidney and submandibular gland, where it is found in the granular convoluted tubule and striated duct cells. It is likely that the enzyme is mainly synthesized in the granular convoluted tubules and then transferred to other tissues by release into the vasculature or interstitial space.

The catalysed reaction is Preferential cleavage of Arg-|-Xaa bonds in small molecule substrates. Highly selective action to release kallidin (lysyl-bradykinin) from kininogen involves hydrolysis of Met-|-Xaa or Leu-|-Xaa.. Glandular kallikreins cleave Met-Lys and Arg-Ser bonds in kininogen to release Lys-bradykinin. This protein may be involved in the regulation of renal function. The chain is Glandular kallikrein-10 (Klk10) from Rattus norvegicus (Rat).